Consider the following 370-residue polypeptide: GTPase Obg (370 aa).

One can recognise an Obg domain in the interval 1 to 159 (MKFIDEARIE…RMLKLELKVL (159 aa)). Positions 128–147 (LHFKSSTNRAPRQKTDGKPG) are disordered. Positions 160–334 (ADVGLLGMPN…LCYAIYDYLS (175 aa)) constitute an OBG-type G domain. Residues 166–173 (GMPNAGKS), 191–195 (FTTLA), 213–216 (DIPG), 284–287 (NKLD), and 315–317 (SAL) contribute to the GTP site. Residues Ser173 and Thr193 each contribute to the Mg(2+) site.

The protein belongs to the TRAFAC class OBG-HflX-like GTPase superfamily. OBG GTPase family. As to quaternary structure, monomer. It depends on Mg(2+) as a cofactor.

Its subcellular location is the cytoplasm. Functionally, an essential GTPase which binds GTP, GDP and possibly (p)ppGpp with moderate affinity, with high nucleotide exchange rates and a fairly low GTP hydrolysis rate. Plays a role in control of the cell cycle, stress response, ribosome biogenesis and in those bacteria that undergo differentiation, in morphogenesis control. The sequence is that of GTPase Obg from Burkholderia cenocepacia (strain ATCC BAA-245 / DSM 16553 / LMG 16656 / NCTC 13227 / J2315 / CF5610) (Burkholderia cepacia (strain J2315)).